The chain runs to 553 residues: CTP synthase (553 aa).

The segment at 1–270 (MTKFVFVTGG…DRIICEELRI (270 aa)) is amidoligase domain. CTP is bound at residue Ser13. Residue Ser13 coordinates UTP. Residues 14–19 (SLGKGI) and Asp71 contribute to the ATP site. The Mg(2+) site is built by Asp71 and Glu144. CTP contacts are provided by residues 151–153 (DIE), 191–196 (KTKPTQ), and Lys227. UTP contacts are provided by residues 191 to 196 (KTKPTQ) and Lys227. One can recognise a Glutamine amidotransferase type-1 domain in the interval 295–547 (TIGMVGKYVD…VEAALAHQQN (253 aa)). Gly356 is an L-glutamine binding site. Cys383 (nucleophile; for glutamine hydrolysis) is an active-site residue. L-glutamine-binding positions include 384–387 (LGMQ), Glu407, and Arg473. Residues His520 and Glu522 contribute to the active site.

The protein belongs to the CTP synthase family. In terms of assembly, homotetramer.

It catalyses the reaction UTP + L-glutamine + ATP + H2O = CTP + L-glutamate + ADP + phosphate + 2 H(+). The catalysed reaction is L-glutamine + H2O = L-glutamate + NH4(+). It carries out the reaction UTP + NH4(+) + ATP = CTP + ADP + phosphate + 2 H(+). Its pathway is pyrimidine metabolism; CTP biosynthesis via de novo pathway; CTP from UDP: step 2/2. Its activity is regulated as follows. Allosterically activated by GTP, when glutamine is the substrate; GTP has no effect on the reaction when ammonia is the substrate. The allosteric effector GTP functions by stabilizing the protein conformation that binds the tetrahedral intermediate(s) formed during glutamine hydrolysis. Inhibited by the product CTP, via allosteric rather than competitive inhibition. Functionally, catalyzes the ATP-dependent amination of UTP to CTP with either L-glutamine or ammonia as the source of nitrogen. Regulates intracellular CTP levels through interactions with the four ribonucleotide triphosphates. The protein is CTP synthase of Ralstonia pickettii (strain 12J).